A 129-amino-acid chain; its full sequence is Glycine cleavage system H protein (129 aa).

A Lipoyl-binding domain is found at 24–106 (SYTVGISEHA…FGDGWFFRVM (83 aa)). K65 carries the post-translational modification N6-lipoyllysine.

The protein belongs to the GcvH family. As to quaternary structure, the glycine cleavage system is composed of four proteins: P, T, L and H. (R)-lipoate is required as a cofactor.

Its function is as follows. The glycine cleavage system catalyzes the degradation of glycine. The H protein shuttles the methylamine group of glycine from the P protein to the T protein. The polypeptide is Glycine cleavage system H protein (Shewanella halifaxensis (strain HAW-EB4)).